The primary structure comprises 291 residues: Protease HtpX homolog (291 aa).

Transmembrane regions (helical) follow at residues 4-24 (IALF…VASL) and 38-58 (LGAL…ISLL). Histidine 144 provides a ligand contact to Zn(2+). The active site involves glutamate 145. Residue histidine 148 coordinates Zn(2+). 2 helical membrane passes run 159–179 (LIQG…GYAV) and 199–219 (VTTI…VAWF). Residue glutamate 224 participates in Zn(2+) binding.

The protein belongs to the peptidase M48B family. The cofactor is Zn(2+).

The protein localises to the cell inner membrane. In Paracidovorax citrulli (strain AAC00-1) (Acidovorax citrulli), this protein is Protease HtpX homolog.